Consider the following 178-residue polypeptide: Cytidylate kinase 2 (178 aa).

7 to 15 (GKSGCGNTT) provides a ligand contact to ATP.

This sequence belongs to the cytidylate kinase family. Type 2 subfamily.

The protein localises to the cytoplasm. It carries out the reaction CMP + ATP = CDP + ADP. The catalysed reaction is dCMP + ATP = dCDP + ADP. The chain is Cytidylate kinase 2 from Borrelia garinii subsp. bavariensis (strain ATCC BAA-2496 / DSM 23469 / PBi) (Borreliella bavariensis).